The chain runs to 130 residues: Small ribosomal subunit protein uS8 (130 aa).

The protein belongs to the universal ribosomal protein uS8 family. As to quaternary structure, part of the 30S ribosomal subunit.

One of the primary rRNA binding proteins, it binds directly to 16S rRNA central domain where it helps coordinate assembly of the platform of the 30S subunit. The chain is Small ribosomal subunit protein uS8 from Methanosarcina mazei (strain ATCC BAA-159 / DSM 3647 / Goe1 / Go1 / JCM 11833 / OCM 88) (Methanosarcina frisia).